The sequence spans 294 residues: MKTKLIVVLGPTAVGKTALGIKLAQQFHGEIISGDSQQVYRKLDIGTAKATAAEQAAVPHHLIDVREVDENYSAFDFVQEATKEIANICARGYLPIIVGGTGLYLQSLLEGYHLGGQVDHEAVLAYRRELETLSDTELSQLVETKQIVMTEPNRRRLMRSLELHKFSQGVQNQGSPYDVLLIGLNDNRQDLYERINARVDKMMAAGLLDEAKWLYDNYPHAQATRGIGYKELFPYFAGDIGLEEAVEKIKQNTRRFAKRQLTWFKNRMAVSFYSVSDSDYKGKINQAVVDFLRN.

Position 10 to 17 (10 to 17 (GPTAVGKT)) interacts with ATP. 12-17 (TAVGKT) provides a ligand contact to substrate. Residues 35–38 (DSQQ) form an interaction with substrate tRNA region.

It belongs to the IPP transferase family. In terms of assembly, monomer. Mg(2+) is required as a cofactor.

The catalysed reaction is adenosine(37) in tRNA + dimethylallyl diphosphate = N(6)-dimethylallyladenosine(37) in tRNA + diphosphate. In terms of biological role, catalyzes the transfer of a dimethylallyl group onto the adenine at position 37 in tRNAs that read codons beginning with uridine, leading to the formation of N6-(dimethylallyl)adenosine (i(6)A). The sequence is that of tRNA dimethylallyltransferase from Streptococcus mutans serotype c (strain ATCC 700610 / UA159).